Reading from the N-terminus, the 297-residue chain is MSNWLVDKLIPSIMRSEVKKSSVPEGLWHKCPSCEAVLYRPELEKTLDVCPKCNHHMRIGARARIDIFLDAEGRAELGADLEPVDRLKFRDGKKYKDRLTAAQKQTGEKDALISMSGTLMGMPIVVSAFEFSFMGGSMGAIVGERFVRAANYALENRCPMVCFSASGGARMQEALISLMQMAKTSAVLARLREEGIPFISVLTDPVYGGVSASLAMLGDVIVGEPKALIGFAGPRVIEQTVREKLPEGFQRSEFLLEHGAIDLIISRGELRPRLARLLAQMTGQQTPEEAREAAAVA.

The region spanning 27–296 is the CoA carboxyltransferase N-terminal domain; that stretch reads LWHKCPSCEA…PEEAREAAAV (270 aa). Residues C31, C34, C50, and C53 each contribute to the Zn(2+) site. The C4-type zinc finger occupies 31 to 53; the sequence is CPSCEAVLYRPELEKTLDVCPKC.

This sequence belongs to the AccD/PCCB family. Acetyl-CoA carboxylase is a heterohexamer composed of biotin carboxyl carrier protein (AccB), biotin carboxylase (AccC) and two subunits each of ACCase subunit alpha (AccA) and ACCase subunit beta (AccD). It depends on Zn(2+) as a cofactor.

Its subcellular location is the cytoplasm. The enzyme catalyses N(6)-carboxybiotinyl-L-lysyl-[protein] + acetyl-CoA = N(6)-biotinyl-L-lysyl-[protein] + malonyl-CoA. Its pathway is lipid metabolism; malonyl-CoA biosynthesis; malonyl-CoA from acetyl-CoA: step 1/1. In terms of biological role, component of the acetyl coenzyme A carboxylase (ACC) complex. Biotin carboxylase (BC) catalyzes the carboxylation of biotin on its carrier protein (BCCP) and then the CO(2) group is transferred by the transcarboxylase to acetyl-CoA to form malonyl-CoA. The polypeptide is Acetyl-coenzyme A carboxylase carboxyl transferase subunit beta (Pseudomonas putida (strain ATCC 700007 / DSM 6899 / JCM 31910 / BCRC 17059 / LMG 24140 / F1)).